Consider the following 353-residue polypeptide: Histidinol-phosphate aminotransferase 1 (353 aa).

Residue Lys-211 is modified to N6-(pyridoxal phosphate)lysine.

The protein belongs to the class-II pyridoxal-phosphate-dependent aminotransferase family. Histidinol-phosphate aminotransferase subfamily. In terms of assembly, homodimer. Requires pyridoxal 5'-phosphate as cofactor.

The catalysed reaction is L-histidinol phosphate + 2-oxoglutarate = 3-(imidazol-4-yl)-2-oxopropyl phosphate + L-glutamate. Its pathway is amino-acid biosynthesis; L-histidine biosynthesis; L-histidine from 5-phospho-alpha-D-ribose 1-diphosphate: step 7/9. The polypeptide is Histidinol-phosphate aminotransferase 1 (hisC1) (Nostoc sp. (strain PCC 7120 / SAG 25.82 / UTEX 2576)).